Here is a 456-residue protein sequence, read N- to C-terminus: Bifunctional protein GlmU (456 aa).

The pyrophosphorylase stretch occupies residues 1–229 (MLNNAMSVVI…LSEVEGVNNR (229 aa)). UDP-N-acetyl-alpha-D-glucosamine-binding positions include 11 to 14 (LAAG), Lys-25, Gln-76, 81 to 82 (GT), 103 to 105 (YGD), Gly-140, Glu-154, Asn-169, and Asn-227. Asp-105 serves as a coordination point for Mg(2+). Asn-227 serves as a coordination point for Mg(2+). Residues 230-250 (LQLSRLERVYQSEQAEKLLLA) are linker. Positions 251 to 456 (GVMLRDPARF…EGWRRPVKKK (206 aa)) are N-acetyltransferase. The UDP-N-acetyl-alpha-D-glucosamine site is built by Arg-333 and Lys-351. The active-site Proton acceptor is His-363. Residues Tyr-366 and Asn-377 each coordinate UDP-N-acetyl-alpha-D-glucosamine. Residues Ala-380, 386–387 (NY), Ser-405, Ala-423, and Arg-440 contribute to the acetyl-CoA site.

It in the N-terminal section; belongs to the N-acetylglucosamine-1-phosphate uridyltransferase family. This sequence in the C-terminal section; belongs to the transferase hexapeptide repeat family. Homotrimer. Mg(2+) serves as cofactor.

It is found in the cytoplasm. The enzyme catalyses alpha-D-glucosamine 1-phosphate + acetyl-CoA = N-acetyl-alpha-D-glucosamine 1-phosphate + CoA + H(+). It carries out the reaction N-acetyl-alpha-D-glucosamine 1-phosphate + UTP + H(+) = UDP-N-acetyl-alpha-D-glucosamine + diphosphate. Its pathway is nucleotide-sugar biosynthesis; UDP-N-acetyl-alpha-D-glucosamine biosynthesis; N-acetyl-alpha-D-glucosamine 1-phosphate from alpha-D-glucosamine 6-phosphate (route II): step 2/2. It participates in nucleotide-sugar biosynthesis; UDP-N-acetyl-alpha-D-glucosamine biosynthesis; UDP-N-acetyl-alpha-D-glucosamine from N-acetyl-alpha-D-glucosamine 1-phosphate: step 1/1. The protein operates within bacterial outer membrane biogenesis; LPS lipid A biosynthesis. Functionally, catalyzes the last two sequential reactions in the de novo biosynthetic pathway for UDP-N-acetylglucosamine (UDP-GlcNAc). The C-terminal domain catalyzes the transfer of acetyl group from acetyl coenzyme A to glucosamine-1-phosphate (GlcN-1-P) to produce N-acetylglucosamine-1-phosphate (GlcNAc-1-P), which is converted into UDP-GlcNAc by the transfer of uridine 5-monophosphate (from uridine 5-triphosphate), a reaction catalyzed by the N-terminal domain. The chain is Bifunctional protein GlmU from Shigella dysenteriae serotype 1 (strain Sd197).